Consider the following 66-residue polypeptide: MQVSVQGNDVDKALRLLKRKLQTEGFFKEIKKRKHYEKPSVKKKRKQMEAERKRRKAQRFRKPDRD.

The segment covering 34-46 (KHYEKPSVKKKRK) has biased composition (basic residues). Residues 34–66 (KHYEKPSVKKKRKQMEAERKRRKAQRFRKPDRD) are disordered.

This sequence belongs to the bacterial ribosomal protein bS21 family.

The sequence is that of Small ribosomal subunit protein bS21A from Geobacter sulfurreducens (strain ATCC 51573 / DSM 12127 / PCA).